The following is a 489-amino-acid chain: FAD-containing monooxygenase EthA (489 aa).

FAD-binding positions include S15, E36, 44-47 (TWDL), D56, and V104. 54–56 (RSD) is an NADP(+) binding site. NADP(+)-binding positions include 183-189 (SGATAVT) and 207-208 (RS).

Belongs to the FAD-binding monooxygenase family. FAD serves as cofactor.

Its subcellular location is the cell membrane. It carries out the reaction ethionamide + NADPH + O2 + H(+) = ethionamide S-oxide + NADP(+) + H2O. In terms of biological role, monooxygenase able to convert a wide range of ketones to the corresponding esters or lactones via a Baeyer-Villiger oxidation reaction. Can act on long-chain aliphatic ketones (2-hexanone to 2-dodecanone) and on aromatic ketones (phenylacetone and benzylacetone). Is also able to catalyze enantioselective sulfoxidation of methyl-p-tolylsulfide. In vivo, likely functions as a BVMO, but the exact nature of the physiological substrate(s) remains to be established. Its function is as follows. Is responsible for the activation of several thiocarbamide-containing pro-drugs, such as ethionamide (ETH), isoxyl (ISO) and thiacetazone (TAC), into reactive species. The sequence is that of FAD-containing monooxygenase EthA (ethA) from Mycobacterium bovis (strain ATCC BAA-935 / AF2122/97).